We begin with the raw amino-acid sequence, 394 residues long: Queuine tRNA-ribosyltransferase (394 aa).

Aspartate 95 acts as the Proton acceptor in catalysis. Substrate contacts are provided by residues 95-99, aspartate 149, glutamine 190, and glycine 217; that span reads DSGGF. The segment at 248 to 254 is RNA binding; that stretch reads GVGTPID. Aspartate 267 (nucleophile) is an active-site residue. The tract at residues 272–276 is RNA binding; important for wobble base 34 recognition; that stretch reads TRNAR. Zn(2+) is bound by residues cysteine 305, cysteine 307, cysteine 310, and histidine 337. The interval 375–394 is disordered; that stretch reads NDANETVGATESTESTESTE.

It belongs to the queuine tRNA-ribosyltransferase family. As to quaternary structure, homodimer. Within each dimer, one monomer is responsible for RNA recognition and catalysis, while the other monomer binds to the replacement base PreQ1. Zn(2+) serves as cofactor.

The enzyme catalyses 7-aminomethyl-7-carbaguanine + guanosine(34) in tRNA = 7-aminomethyl-7-carbaguanosine(34) in tRNA + guanine. It participates in tRNA modification; tRNA-queuosine biosynthesis. Functionally, catalyzes the base-exchange of a guanine (G) residue with the queuine precursor 7-aminomethyl-7-deazaguanine (PreQ1) at position 34 (anticodon wobble position) in tRNAs with GU(N) anticodons (tRNA-Asp, -Asn, -His and -Tyr). Catalysis occurs through a double-displacement mechanism. The nucleophile active site attacks the C1' of nucleotide 34 to detach the guanine base from the RNA, forming a covalent enzyme-RNA intermediate. The proton acceptor active site deprotonates the incoming PreQ1, allowing a nucleophilic attack on the C1' of the ribose to form the product. After dissociation, two additional enzymatic reactions on the tRNA convert PreQ1 to queuine (Q), resulting in the hypermodified nucleoside queuosine (7-(((4,5-cis-dihydroxy-2-cyclopenten-1-yl)amino)methyl)-7-deazaguanosine). This Sorangium cellulosum (strain So ce56) (Polyangium cellulosum (strain So ce56)) protein is Queuine tRNA-ribosyltransferase.